The chain runs to 457 residues: UPF0210 protein Sfum_2948 (457 aa).

Belongs to the UPF0210 family. Homodimer.

The polypeptide is UPF0210 protein Sfum_2948 (Syntrophobacter fumaroxidans (strain DSM 10017 / MPOB)).